The sequence spans 198 residues: Probable chemoreceptor glutamine deamidase CheD (198 aa).

Belongs to the CheD family.

It catalyses the reaction L-glutaminyl-[protein] + H2O = L-glutamyl-[protein] + NH4(+). In terms of biological role, probably deamidates glutamine residues to glutamate on methyl-accepting chemotaxis receptors (MCPs), playing an important role in chemotaxis. The chain is Probable chemoreceptor glutamine deamidase CheD from Xanthomonas campestris pv. campestris (strain 8004).